A 302-amino-acid chain; its full sequence is CRISPR-associated endonuclease Cas1 1 (302 aa).

Glu-159, His-219, and Glu-234 together coordinate Mn(2+).

This sequence belongs to the CRISPR-associated endonuclease Cas1 family. Homodimer, forms a heterotetramer with a Cas2 homodimer. The cofactor is Mg(2+). Mn(2+) is required as a cofactor.

Its function is as follows. CRISPR (clustered regularly interspaced short palindromic repeat), is an adaptive immune system that provides protection against mobile genetic elements (viruses, transposable elements and conjugative plasmids). CRISPR clusters contain spacers, sequences complementary to antecedent mobile elements, and target invading nucleic acids. CRISPR clusters are transcribed and processed into CRISPR RNA (crRNA). Acts as a dsDNA endonuclease. Involved in the integration of spacer DNA into the CRISPR cassette. The chain is CRISPR-associated endonuclease Cas1 1 from Pyrobaculum aerophilum (strain ATCC 51768 / DSM 7523 / JCM 9630 / CIP 104966 / NBRC 100827 / IM2).